A 78-amino-acid polypeptide reads, in one-letter code: Large ribosomal subunit protein bL28 (78 aa).

The interval 1-27 (MSAYCQVTGRKPSFGKSVSHSHRRTNR) is disordered.

This sequence belongs to the bacterial ribosomal protein bL28 family.

The polypeptide is Large ribosomal subunit protein bL28 (Corynebacterium kroppenstedtii (strain DSM 44385 / JCM 11950 / CIP 105744 / CCUG 35717)).